The following is a 153-amino-acid chain: SsrA-binding protein (153 aa).

Residues 129 to 153 (KREDMKKKDQSREMAQALREKSKSH) are disordered.

It belongs to the SmpB family.

The protein localises to the cytoplasm. In terms of biological role, required for rescue of stalled ribosomes mediated by trans-translation. Binds to transfer-messenger RNA (tmRNA), required for stable association of tmRNA with ribosomes. tmRNA and SmpB together mimic tRNA shape, replacing the anticodon stem-loop with SmpB. tmRNA is encoded by the ssrA gene; the 2 termini fold to resemble tRNA(Ala) and it encodes a 'tag peptide', a short internal open reading frame. During trans-translation Ala-aminoacylated tmRNA acts like a tRNA, entering the A-site of stalled ribosomes, displacing the stalled mRNA. The ribosome then switches to translate the ORF on the tmRNA; the nascent peptide is terminated with the 'tag peptide' encoded by the tmRNA and targeted for degradation. The ribosome is freed to recommence translation, which seems to be the essential function of trans-translation. This Geobacter sulfurreducens (strain ATCC 51573 / DSM 12127 / PCA) protein is SsrA-binding protein.